A 392-amino-acid polypeptide reads, in one-letter code: Selenide, water dikinase 1 (392 aa).

An N-acetylserine modification is found at Ser-2. Residue Cys-31 is part of the active site. ATP-binding positions include Lys-32, 67–69 (GMD), Asp-87, Asp-110, and 161–164 (GGQT). Asp-69 lines the Mg(2+) pocket. Residue Asp-110 participates in Mg(2+) binding. Asp-265 contacts Mg(2+).

The protein belongs to the selenophosphate synthase 1 family. Class II subfamily. In terms of assembly, homodimer. Heterodimer with isoform 3. As to quaternary structure, homodimer. Heterodimer with isoform 4. Homodimer. Heterodimer with isoform 1. In terms of assembly, homodimer. Heterodimer with isoform 2. Requires Mg(2+) as cofactor. In terms of tissue distribution, gradually expressed during the cell cycle until G2/M phase and then decreases. As to expression, gradually expressed during the cell cycle until S phase and then decreases.

It localises to the cell membrane. It is found in the nucleus membrane. The protein resides in the cytoplasm. It catalyses the reaction hydrogenselenide + ATP + H2O = selenophosphate + AMP + phosphate + 2 H(+). With respect to regulation, activated by phosphate ions and by potassium ions. Functionally, synthesizes selenophosphate from selenide and ATP. This is Selenide, water dikinase 1 (SEPHS1) from Homo sapiens (Human).